Consider the following 565-residue polypeptide: MEPKTKKQRSLYIPYAGPVLLEFPLLNKGSAFSMEERRNFNLLGLLPEVVETIEEQAERAWIQYQGFKTEIDKHIYLRNIQDTNETLFYRLVNNHLDEMMPVIYTPTVGAACERFSEIYRRSRGVFISYQNRHNMDDILQNVPNHNIKVIVVTDGERILGLGDQGIGGMGIPIGKLSLYTACGGISPAYTLPVVLDVGTNNQQLLNDPLYMGWRNPRITDDEYYEFVDEFIQAVKQRWPDVLLQFEDFAQKNAMPLLNRYRNEICSFNDDIQGTAAVTVGTLIAASRAAGGQLSEKKIVFLGAGSAGCGIAEMIISQTQREGLSEEAARQKVFMVDRFGLLTDKMPNLLPFQTKLVQKRENLSDWDTDSDVLSLLDVVRNVKPDILIGVSGQTGLFTEEIIREMHKHCPRPIVMPLSNPTSRVEATPQDIIAWTEGNALVATGSPFNPVVWKDKIYPIAQCNNAFIFPGIGLGVIASGASRITDEMLMSASETLAQYSPLVLNGEGMVLPELKDIQKVSRAIAFAVGKMAQQQGVAVKTSAEALQQAIDDNFWQAEYRDYRRTSI.

The active-site Proton donor is Tyr-104. Position 157 (Arg-157) interacts with NAD(+). The active-site Proton acceptor is the Lys-175. Glu-246, Asp-247, and Asp-270 together coordinate a divalent metal cation. 2 residues coordinate NAD(+): Asp-270 and Asn-418.

The protein belongs to the malic enzymes family. In terms of assembly, homotetramer. It depends on Mg(2+) as a cofactor. Requires Mn(2+) as cofactor.

The enzyme catalyses (S)-malate + NAD(+) = pyruvate + CO2 + NADH. It carries out the reaction oxaloacetate + H(+) = pyruvate + CO2. This Escherichia coli (strain K12 / MC4100 / BW2952) protein is NAD-dependent malic enzyme.